Reading from the N-terminus, the 270-residue chain is Phosphatidylglycerol--prolipoprotein diacylglyceryl transferase (270 aa).

The next 4 helical transmembrane spans lie at 18 to 38 (IAVH…LWLA), 55 to 75 (LVLF…VIFQ), 89 to 109 (IWNG…TGII), and 115 to 135 (GLSF…GQAI). Arg-137 lines the a 1,2-diacyl-sn-glycero-3-phospho-(1'-sn-glycerol) pocket. The next 3 membrane-spanning stretches (helical) occupy residues 177–197 (QPTF…LLLL), 205–225 (GELF…IEGL), and 236–256 (LRIA…LIAY).

The protein belongs to the Lgt family.

The protein localises to the cell membrane. The catalysed reaction is L-cysteinyl-[prolipoprotein] + a 1,2-diacyl-sn-glycero-3-phospho-(1'-sn-glycerol) = an S-1,2-diacyl-sn-glyceryl-L-cysteinyl-[prolipoprotein] + sn-glycerol 1-phosphate + H(+). It functions in the pathway protein modification; lipoprotein biosynthesis (diacylglyceryl transfer). Its function is as follows. Catalyzes the transfer of the diacylglyceryl group from phosphatidylglycerol to the sulfhydryl group of the N-terminal cysteine of a prolipoprotein, the first step in the formation of mature lipoproteins. This is Phosphatidylglycerol--prolipoprotein diacylglyceryl transferase from Bacillus licheniformis (strain ATCC 14580 / DSM 13 / JCM 2505 / CCUG 7422 / NBRC 12200 / NCIMB 9375 / NCTC 10341 / NRRL NRS-1264 / Gibson 46).